The following is a 180-amino-acid chain: ATP-dependent protease subunit HslV (180 aa).

The active site involves T5. Na(+) is bound by residues G165, C168, and T171.

This sequence belongs to the peptidase T1B family. HslV subfamily. A double ring-shaped homohexamer of HslV is capped on each side by a ring-shaped HslU homohexamer. The assembly of the HslU/HslV complex is dependent on binding of ATP.

The protein resides in the cytoplasm. It carries out the reaction ATP-dependent cleavage of peptide bonds with broad specificity.. Allosterically activated by HslU binding. Its function is as follows. Protease subunit of a proteasome-like degradation complex believed to be a general protein degrading machinery. The sequence is that of ATP-dependent protease subunit HslV from Helicobacter acinonychis (strain Sheeba).